A 196-amino-acid chain; its full sequence is Ribose 1,5-bisphosphate phosphokinase PhnN (196 aa).

It belongs to the ribose 1,5-bisphosphokinase family.

It catalyses the reaction alpha-D-ribose 1,5-bisphosphate + ATP = 5-phospho-alpha-D-ribose 1-diphosphate + ADP. It functions in the pathway metabolic intermediate biosynthesis; 5-phospho-alpha-D-ribose 1-diphosphate biosynthesis; 5-phospho-alpha-D-ribose 1-diphosphate from D-ribose 5-phosphate (route II): step 3/3. Catalyzes the phosphorylation of ribose 1,5-bisphosphate to 5-phospho-D-ribosyl alpha-1-diphosphate (PRPP). This Psychromonas ingrahamii (strain DSM 17664 / CCUG 51855 / 37) protein is Ribose 1,5-bisphosphate phosphokinase PhnN.